Here is a 1012-residue protein sequence, read N- to C-terminus: MDLVSFFNPYLENVRTKKKTKSTFLRIFPRGIMHDGAPGLMKTLCDSEPRMFYQDKQYILKNDMTWPSLSQVAEKELRAPLKFHIYDASESLLFTDSIENIPFQYRHFVIPSGNVIKLFGKTECGKKVCINVFGQNSYFYCEYQCKKELNSRICSLLNSSEIKMSCSFSIESVTKYNFYGYNTEPIKNLFKLSFSNFYISNRIGKILLNEGVSVYEAEVEILNRFFIDNNLKSFGWYQINYLSIQEFAKSSNVEIELNCHVSDLFLLKEDSWPLYDCCSFDIECLSQNGNFPDAEQMVTSSLISVIDFDSEGNYQSKHLFTLGTCEQIEGVFIYEFASEFELLYAFFLFLKCKSPEILTGYNIINFDLKYLCTRMEKIYNFEIGGFSKLKRGKFSVIVPYEQHKKFLNSLTKVNMSGILCFDMYNVYSSKISAQNYKLDTIAKLCLNQEKENLSYKEIPKKFIDGSKGRAVVGRYCIQDSLLVVQLFTKINYHYEMAEVASLAYITIRCAVFEGQQKKIFPCILHEAKNLNMILPSMNTNFNKGKENVGYKGATVLEPKIGYYATPTVVFDFQSLYPSIMMAHNLCYSTLVVDENAVIGLHADDILTVHVGPVTHRFVKKTVRESILASLLKKWLDKRKEVKMQMKMCNNPVMEMLLDKKQLALKTTCNSVYGVTGATHSLLPCVAIAASVTCLGREMLCKTVDYVDSAMYSDTFFIEKFGLTRGDFSGTFGIEVIYGDTDSLFVTFKNVCPKALKRIAPSIASHITNTLFKHPIKLEFEKILFPLILICKKRYIGKLDDATLVFKGVELVRKTSCDFVKVVVKDIIDLLFWDVDVQKSAEKLSNMTIQEIYENGVPDGIQKIIKKLCDARDALFLNRVNIKSLVLSSVLSKDISAYKQANLPHLAVVKRLAQRKEELPNIGDRVMYILIAPTETVKKTFHNYELAEDPAYAIENNLKINADKYFEQIMKAVTNAISPIFPKTGIKKEKFLLSILPLKVYVDQSFCDLTDVL.

The protein belongs to the DNA polymerase type-B family.

The protein localises to the host nucleus. It catalyses the reaction DNA(n) + a 2'-deoxyribonucleoside 5'-triphosphate = DNA(n+1) + diphosphate. The protein is DNA polymerase catalytic subunit (U38) of Homo sapiens (Human).